A 601-amino-acid polypeptide reads, in one-letter code: COP9 signalosome complex subunit 1 (601 aa).

The span at 1-10 (MQNELLDDPM) shows a compositional bias: acidic residues. Disordered stretches follow at residues 1 to 54 (MQNE…LDNP) and 268 to 294 (DADD…PYMV). The span at 14–24 (APAAEAAAADE) shows a compositional bias: low complexity. The PCI domain occupies 338–500 (TILQIKTECL…GIVRILDERD (163 aa)). The interval 535–581 (SISDKETRPKRKNQKESAKFDRNFGGIDVDEDPRGIAGPSGLSDDFN) is disordered.

It belongs to the CSN1 family. Component of the CSN complex, probably composed of csn-1, csn-2, csn-3, csn-4, csn-5, csn-6 and csn-7. Within the complex it probably interacts directly with csn-2, csn-4 and csn-5. May interact with itself. Interacts with rbx-1.

The protein localises to the cytoplasm. It localises to the nucleus. In terms of biological role, essential component of the COP9 signalosome complex (CSN), a complex involved in various cellular and developmental processes. The CSN complex is an essential regulator of the ubiquitin (Ubl) conjugation pathway by mediating the deneddylation of the cullin subunits of the SCF-type E3 ligase complexes, leading to decrease the Ubl ligase activity of SCF. The CSN complex plays an essential role in embryogenesis and oogenesis and is required to regulate microtubule stability in the early embryo. Mediates mei-3/katanin targeting for degradation at the meiosis to mitosis transition via deneddylation of cul-3. This is COP9 signalosome complex subunit 1 (csn-1) from Caenorhabditis elegans.